The primary structure comprises 413 residues: Serine hydroxymethyltransferase (413 aa).

(6S)-5,6,7,8-tetrahydrofolate is bound by residues leucine 117 and 121-123; that span reads GHL. Lysine 226 is modified (N6-(pyridoxal phosphate)lysine). (6S)-5,6,7,8-tetrahydrofolate contacts are provided by residues glutamate 239 and 349 to 351; that span reads SPF.

Belongs to the SHMT family. In terms of assembly, homodimer. The cofactor is pyridoxal 5'-phosphate.

The protein resides in the cytoplasm. The enzyme catalyses (6R)-5,10-methylene-5,6,7,8-tetrahydrofolate + glycine + H2O = (6S)-5,6,7,8-tetrahydrofolate + L-serine. It functions in the pathway one-carbon metabolism; tetrahydrofolate interconversion. The protein operates within amino-acid biosynthesis; glycine biosynthesis; glycine from L-serine: step 1/1. In terms of biological role, catalyzes the reversible interconversion of serine and glycine with tetrahydrofolate (THF) serving as the one-carbon carrier. This reaction serves as the major source of one-carbon groups required for the biosynthesis of purines, thymidylate, methionine, and other important biomolecules. Also exhibits THF-independent aldolase activity toward beta-hydroxyamino acids, producing glycine and aldehydes, via a retro-aldol mechanism. This chain is Serine hydroxymethyltransferase, found in Bacillus anthracis (strain A0248).